A 479-amino-acid polypeptide reads, in one-letter code: Chromosomal replication initiator protein DnaA (479 aa).

A domain I, interacts with DnaA modulators region spans residues 1–71 (MNLTQIWKAT…RNALARVVGY (71 aa)). A domain II region spans residues 71–138 (YPVQVQVLIA…LDLASAMRSG (68 aa)). Positions 86 to 99 (TEPSPSLTLSNGSR) are enriched in polar residues. The disordered stretch occupies residues 86 to 106 (TEPSPSLTLSNGSRLMSDPEP). Residues 139–355 (MLNPRYTFSS…GSLNRVAAYA (217 aa)) are domain III, AAA+ region. Residues G183, G185, K186, and T187 each coordinate ATP. The interval 356 to 479 (ELNRAPITIE…IRERIQMLRG (124 aa)) is domain IV, binds dsDNA.

The protein belongs to the DnaA family. Oligomerizes as a right-handed, spiral filament on DNA at oriC.

The protein localises to the cytoplasm. Functionally, plays an essential role in the initiation and regulation of chromosomal replication. ATP-DnaA binds to the origin of replication (oriC) to initiate formation of the DNA replication initiation complex once per cell cycle. Binds the DnaA box (a 9 base pair repeat at the origin) and separates the double-stranded (ds)DNA. Forms a right-handed helical filament on oriC DNA; dsDNA binds to the exterior of the filament while single-stranded (ss)DNA is stabiized in the filament's interior. The ATP-DnaA-oriC complex binds and stabilizes one strand of the AT-rich DNA unwinding element (DUE), permitting loading of DNA polymerase. After initiation quickly degrades to an ADP-DnaA complex that is not apt for DNA replication. Binds acidic phospholipids. The polypeptide is Chromosomal replication initiator protein DnaA (Chloroflexus aurantiacus (strain ATCC 29366 / DSM 635 / J-10-fl)).